A 73-amino-acid polypeptide reads, in one-letter code: uncharacterized protein (73 aa).

It belongs to the asfivirus I73R family.

It localises to the virion. This is an uncharacterized protein from Ornithodoros (relapsing fever ticks).